The following is a 592-amino-acid chain: Frizzled-9 (592 aa).

An N-terminal signal peptide occupies residues 1-23 (MAVPPLLRGALLLWQLLATGGAA). The Extracellular segment spans residues 24–230 (LEIGRFDPER…EVFWSRRDKD (207 aa)). In terms of domain architecture, FZ spans 35-156 (RGPAPCQAME…NDPHALCMEA (122 aa)). Disulfide bonds link Cys-40–Cys-101, Cys-48–Cys-94, Cys-85–Cys-123, Cys-112–Cys-153, and Cys-116–Cys-140. A required for Wnt-activated receptor activity region spans residues 59–173 (PNLLGHTSQG…PTEPHKGLGM (115 aa)). The chain crosses the membrane as a helical span at residues 231 to 251 (FALVWMAVWSALCFFSTAFTV). The Cytoplasmic portion of the chain corresponds to 252–267 (FTFLLEPHRFQYPERP). Residues 268–288 (IIFLSMCYNVYSLAFLIRAVA) form a helical membrane-spanning segment. Residues 289 to 314 (GAQSVACDQEAGALYVIQEGLENTGC) lie on the Extracellular side of the membrane. A helical membrane pass occupies residues 315 to 335 (TLVFLLLYYFGMASSLWWVVL). The Cytoplasmic segment spans residues 336 to 356 (TLTWFLAAGKKWGHEAIEAHG). A helical membrane pass occupies residues 357–377 (SYFHMAAWGLPALKTIVVLTL). Over 378–401 (RKVAGDELTGLCYVASMDPAALTG) the chain is Extracellular. Residues 402–422 (FVLVPLSCYLVLGTSFLLTGF) traverse the membrane as a helical segment. Residues 423–448 (VALFHIRKIMKTGGTNTEKLEKLMVK) are Cytoplasmic-facing. The helical transmembrane segment at 449-469 (IGVFSILYTVPATCVIVCYVY) threads the bilayer. Residues 470–509 (ERLNMDFWRLRATEQPCTAAAVPGGRRDCSLPGGSVPTVA) lie on the Extracellular side of the membrane. The chain crosses the membrane as a helical span at residues 510 to 530 (VFMLKIFMSLVVGITSGVWVW). Over 531 to 592 (SSKTFQTWQS…DPSLENPTHL (62 aa)) the chain is Cytoplasmic. The Lys-Thr-X-X-X-Trp motif, mediates interaction with the PDZ domain of Dvl family members motif lies at 533 to 538 (KTFQTW). A required for CTNNB1 accumulation and TCF transcription factor activity region spans residues 555-592 (ACRTPGGYGRGTHCHYKAPTVVLHMTKTDPSLENPTHL).

It belongs to the G-protein coupled receptor Fz/Smo family. Ubiquitinated by ZNRF3, leading to its degradation by the proteasome.

Its subcellular location is the cell membrane. Its function is as follows. Receptor for WNT2 that is coupled to the beta-catenin canonical signaling pathway, which leads to the activation of disheveled proteins, inhibition of GSK-3 kinase, nuclear accumulation of beta-catenin and activation of Wnt target genes. Plays a role in neuromuscular junction (NMJ) assembly by negatively regulating the clustering of acetylcholine receptors (AChR) through the beta-catenin canonical signaling pathway. May play a role in neural progenitor cells (NPCs) viability through the beta-catenin canonical signaling pathway by negatively regulating cell cycle arrest leading to inhibition of neuron apoptotic process. During hippocampal development, regulates neuroblast proliferation and apoptotic cell death. Controls bone formation through non canonical Wnt signaling mediated via ISG15. Positively regulates bone regeneration through non canonical Wnt signaling. The protein is Frizzled-9 of Rattus norvegicus (Rat).